Consider the following 575-residue polypeptide: Alpha-(1,6)-fucosyltransferase (575 aa).

The Cytoplasmic segment spans residues 1 to 9 (MRPWTGSWR). Residues 10 to 30 (WIMLILFAWGTLLFYIGGHLV) form a helical; Signal-anchor for type II membrane protein membrane-spanning segment. Residues 31–575 (RDNDHPDHSS…KYPTYPEAEK (545 aa)) are Lumenal-facing. Intrachain disulfides connect Cys204–Cys266, Cys212–Cys230, and Cys218–Cys222. A GT23 domain is found at 206–493 (KAKKLVCNIN…PDASANFHSL (288 aa)). A Phosphoserine modification is found at Ser278. Residues 299 to 305 (PRPPYLP) carry the SH3-binding motif. The tract at residues 365–366 (RR) is important for donor substrate binding. Cys465 and Cys472 form a disulfide bridge. In terms of domain architecture, SH3 spans 502–563 (QNAHNQIAIY…PSYKVREKIE (62 aa)).

The protein belongs to the glycosyltransferase 23 family. Post-translationally, tyrosine phosphorylated by PKDCC/VLK.

Its subcellular location is the golgi apparatus. The protein resides in the golgi stack membrane. The enzyme catalyses N(4)-{beta-D-GlcNAc-(1-&gt;2)-alpha-D-Man-(1-&gt;3)-[beta-D-GlcNAc-(1-&gt;2)-alpha-D-Man-(1-&gt;6)]-beta-D-Man-(1-&gt;4)-beta-D-GlcNAc-(1-&gt;4)-beta-D-GlcNAc}-L-asparaginyl-[protein] + GDP-beta-L-fucose = an N(4)-{beta-D-GlcNAc-(1-&gt;2)-alpha-D-Man-(1-&gt;3)-[beta-D-GlcNAc-(1-&gt;2)-alpha-D-Man-(1-&gt;6)]-beta-D-Man-(1-&gt;4)-beta-D-GlcNAc-(1-&gt;4)-[alpha-L-Fuc-(1-&gt;6)]-beta-D-GlcNAc}-L-asparaginyl-[protein] + GDP + H(+). It functions in the pathway protein modification; protein glycosylation. In terms of biological role, catalyzes the addition of fucose in alpha 1-6 linkage to the first GlcNAc residue, next to the peptide chains in N-glycans. This is Alpha-(1,6)-fucosyltransferase (FUT8) from Canis lupus familiaris (Dog).